The following is a 274-amino-acid chain: Diaminopimelate epimerase (274 aa).

Substrate contacts are provided by Asn-11, Gln-44, and Asn-64. Cys-73 serves as the catalytic Proton donor. Residues 74–75 (GN), Asn-157, Asn-190, and 208–209 (ER) contribute to the substrate site. Residue Cys-217 is the Proton acceptor of the active site. 218-219 (GS) contributes to the substrate binding site.

This sequence belongs to the diaminopimelate epimerase family. As to quaternary structure, homodimer.

The protein resides in the cytoplasm. It carries out the reaction (2S,6S)-2,6-diaminopimelate = meso-2,6-diaminopimelate. The protein operates within amino-acid biosynthesis; L-lysine biosynthesis via DAP pathway; DL-2,6-diaminopimelate from LL-2,6-diaminopimelate: step 1/1. In terms of biological role, catalyzes the stereoinversion of LL-2,6-diaminopimelate (L,L-DAP) to meso-diaminopimelate (meso-DAP), a precursor of L-lysine and an essential component of the bacterial peptidoglycan. This chain is Diaminopimelate epimerase, found in Pasteurella multocida (strain Pm70).